The following is a 199-amino-acid chain: NAD(P)H dehydrogenase (quinone) (199 aa).

The region spanning 4-190 (MLVLYYSAYG…DGARFQGRRV (187 aa)) is the Flavodoxin-like domain. FMN is bound by residues 10 to 15 (SAYGYM) and 78 to 80 (TRY). Tyr-12 provides a ligand contact to NAD(+). Substrate is bound at residue Trp-98. Residues 113–119 (STATQHG) and His-134 each bind FMN. The interval 157–181 (GGAPYGMTTTADGDGSRQPSAQELD) is disordered. Polar residues predominate over residues 163 to 177 (MTTTADGDGSRQPSA).

This sequence belongs to the WrbA family. It depends on FMN as a cofactor.

It catalyses the reaction a quinone + NADH + H(+) = a quinol + NAD(+). It carries out the reaction a quinone + NADPH + H(+) = a quinol + NADP(+). This chain is NAD(P)H dehydrogenase (quinone), found in Brucella melitensis biotype 2 (strain ATCC 23457).